Here is a 390-residue protein sequence, read N- to C-terminus: L-serine phosphate decarboxylase Cj1436c (390 aa).

K243 is modified (N6-(pyridoxal phosphate)lysine).

Belongs to the class-I pyridoxal-phosphate-dependent aminotransferase family. It depends on pyridoxal 5'-phosphate as a cofactor.

The catalysed reaction is O-phospho-L-serine + H(+) = phosphoethanolamine + CO2. It participates in capsule biogenesis; capsule polysaccharide biosynthesis. Its function is as follows. Pyridoxal phosphate (PLP)-dependent decarboxylase involved in the biosynthesis of amidated D-glucuronic acid structures found on the capsular polysaccharide (CPS) of C.jejuni. Catalyzes the decarboxylation of L-serine phosphate to ethanolamine phosphate. Less active with L-threonine phosphate. No activity with L-serine, L-threonine, L-aspartate or L-glutamate. In Campylobacter jejuni subsp. jejuni serotype O:2 (strain ATCC 700819 / NCTC 11168), this protein is L-serine phosphate decarboxylase Cj1436c.